Reading from the N-terminus, the 388-residue chain is Lipid-A-disaccharide synthase (388 aa).

Belongs to the LpxB family.

The enzyme catalyses a lipid X + a UDP-2-N,3-O-bis[(3R)-3-hydroxyacyl]-alpha-D-glucosamine = a lipid A disaccharide + UDP + H(+). It functions in the pathway bacterial outer membrane biogenesis; LPS lipid A biosynthesis. Condensation of UDP-2,3-diacylglucosamine and 2,3-diacylglucosamine-1-phosphate to form lipid A disaccharide, a precursor of lipid A, a phosphorylated glycolipid that anchors the lipopolysaccharide to the outer membrane of the cell. This Burkholderia mallei (strain NCTC 10247) protein is Lipid-A-disaccharide synthase.